A 481-amino-acid chain; its full sequence is uncharacterized protein (481 aa).

Residues F18–F38 form a helical membrane-spanning segment.

The protein localises to the cell inner membrane. In terms of biological role, involved in DNA conjugation in the recipient strain. This is an uncharacterized protein from Mycolicibacterium smegmatis (strain MKD8) (Mycobacterium smegmatis).